The primary structure comprises 200 residues: Glutathione S-transferase domain-containing protein DDB_G0273153/DDB_G0273923 (200 aa).

A GST N-terminal domain is found at 1–71; it reads MISSIYIFKI…YISNNHNFSG (71 aa). The GST C-terminal domain occupies 73–195; that stretch reads SLQESARVDD…INSNNINSQS (123 aa).

It belongs to the GST superfamily.

The polypeptide is Glutathione S-transferase domain-containing protein DDB_G0273153/DDB_G0273923 (Dictyostelium discoideum (Social amoeba)).